We begin with the raw amino-acid sequence, 248 residues long: 23S rRNA (guanosine-2'-O-)-methyltransferase RlmB (248 aa).

Residues Gly-200, Ile-220, and Leu-229 each coordinate S-adenosyl-L-methionine.

This sequence belongs to the class IV-like SAM-binding methyltransferase superfamily. RNA methyltransferase TrmH family. RlmB subfamily.

It localises to the cytoplasm. The enzyme catalyses guanosine(2251) in 23S rRNA + S-adenosyl-L-methionine = 2'-O-methylguanosine(2251) in 23S rRNA + S-adenosyl-L-homocysteine + H(+). Its function is as follows. Specifically methylates the ribose of guanosine 2251 in 23S rRNA. In Acinetobacter baylyi (strain ATCC 33305 / BD413 / ADP1), this protein is 23S rRNA (guanosine-2'-O-)-methyltransferase RlmB.